The primary structure comprises 278 residues: Large ribosomal subunit protein uL2 (278 aa).

2 disordered regions span residues 29-53 (PVKSLTEGKRKTGGRNNKGHVTSRG) and 221-278 (RGVA…KKKR). Residues 269–278 (IRSRHAKKKR) show a composition bias toward basic residues.

Belongs to the universal ribosomal protein uL2 family. As to quaternary structure, part of the 50S ribosomal subunit. Forms a bridge to the 30S subunit in the 70S ribosome.

Functionally, one of the primary rRNA binding proteins. Required for association of the 30S and 50S subunits to form the 70S ribosome, for tRNA binding and peptide bond formation. It has been suggested to have peptidyltransferase activity; this is somewhat controversial. Makes several contacts with the 16S rRNA in the 70S ribosome. In Erythrobacter litoralis (strain HTCC2594), this protein is Large ribosomal subunit protein uL2.